The following is a 253-amino-acid chain: Sec-independent protein translocase protein TatC (253 aa).

Transmembrane regions (helical) follow at residues 19–39 (ILII…LATP), 70–90 (FAFT…LWAF), 109–129 (IAFF…FPFL), 154–174 (FLFQ…VVMF), and 194–214 (FFVL…SHLM).

This sequence belongs to the TatC family. As to quaternary structure, forms a complex with TatA.

It is found in the cell membrane. In terms of biological role, part of the twin-arginine translocation (Tat) system that transports large folded proteins containing a characteristic twin-arginine motif in their signal peptide across membranes. This Halalkalibacterium halodurans (strain ATCC BAA-125 / DSM 18197 / FERM 7344 / JCM 9153 / C-125) (Bacillus halodurans) protein is Sec-independent protein translocase protein TatC.